The chain runs to 118 residues: UPF0342 protein BAMEG_3696 (118 aa).

This sequence belongs to the UPF0342 family.

This chain is UPF0342 protein BAMEG_3696, found in Bacillus anthracis (strain CDC 684 / NRRL 3495).